We begin with the raw amino-acid sequence, 344 residues long: tRNA N6-adenosine threonylcarbamoyltransferase (344 aa).

Residues histidine 110 and histidine 114 each contribute to the Fe cation site. Substrate contacts are provided by residues valine 133–alanine 137, aspartate 166, glycine 179, and asparagine 278. Aspartate 303 is a binding site for Fe cation.

It belongs to the KAE1 / TsaD family. Requires Fe(2+) as cofactor.

Its subcellular location is the cytoplasm. The enzyme catalyses L-threonylcarbamoyladenylate + adenosine(37) in tRNA = N(6)-L-threonylcarbamoyladenosine(37) in tRNA + AMP + H(+). Its function is as follows. Required for the formation of a threonylcarbamoyl group on adenosine at position 37 (t(6)A37) in tRNAs that read codons beginning with adenine. Is involved in the transfer of the threonylcarbamoyl moiety of threonylcarbamoyl-AMP (TC-AMP) to the N6 group of A37, together with TsaE and TsaB. TsaD likely plays a direct catalytic role in this reaction. This chain is tRNA N6-adenosine threonylcarbamoyltransferase, found in Chlamydia abortus (strain DSM 27085 / S26/3) (Chlamydophila abortus).